The sequence spans 95 residues: Co-chaperonin GroES (95 aa).

This sequence belongs to the GroES chaperonin family. Heptamer of 7 subunits arranged in a ring. Interacts with the chaperonin GroEL.

The protein resides in the cytoplasm. Functionally, together with the chaperonin GroEL, plays an essential role in assisting protein folding. The GroEL-GroES system forms a nano-cage that allows encapsulation of the non-native substrate proteins and provides a physical environment optimized to promote and accelerate protein folding. GroES binds to the apical surface of the GroEL ring, thereby capping the opening of the GroEL channel. This is Co-chaperonin GroES from Pseudoalteromonas translucida (strain TAC 125).